The sequence spans 40 residues: Photosystem II reaction center protein Psb30 (40 aa).

Residues V12–V32 form a helical membrane-spanning segment.

This sequence belongs to the Psb30/Ycf12 family. As to quaternary structure, PSII is composed of 1 copy each of membrane proteins PsbA, PsbB, PsbC, PsbD, PsbE, PsbF, PsbH, PsbI, PsbJ, PsbK, PsbL, PsbM, PsbT, PsbX, PsbY, PsbZ, Psb30/Ycf12, peripheral proteins PsbO, CyanoQ (PsbQ), PsbU, PsbV and a large number of cofactors. It forms dimeric complexes.

Its subcellular location is the cellular thylakoid membrane. A core subunit of photosystem II (PSII), probably helps stabilize the reaction center. This Nostoc sp. (strain PCC 7120 / SAG 25.82 / UTEX 2576) protein is Photosystem II reaction center protein Psb30.